Consider the following 357-residue polypeptide: Acyl-coenzyme A diphosphatase NUDT19 (357 aa).

Residues 10–242 enclose the Nudix hydrolase domain; it reads AATVMLAAGW…IWLAPPQFYE (233 aa). A disordered region spans residues 72–94; sequence PRFGLGPEPPRQPPFPGLSHGDA. Over residues 78-87 the composition is skewed to pro residues; the sequence is PEPPRQPPFP. Positions 97 to 118 match the Nudix box motif; it reads AALPDDVALRICAIRETFEEAG. Positions 112 and 116 each coordinate Mg(2+). Lysine 300 is modified (N6-succinyllysine). The Microbody targeting signal signature appears at 355-357; it reads AHL.

The protein belongs to the Nudix hydrolase family. Monomer. Requires Mg(2+) as cofactor. Mn(2+) is required as a cofactor.

The protein resides in the peroxisome. The enzyme catalyses an acyl-CoA + H2O = an acyl-4'-phosphopantetheine + adenosine 3',5'-bisphosphate + 2 H(+). It carries out the reaction CoA + H2O = (R)-4'-phosphopantetheine + adenosine 3',5'-bisphosphate + 2 H(+). It catalyses the reaction hexanoyl-CoA + H2O = hexanoyl-4'-phosphopantetheine + adenosine 3',5'-bisphosphate + 2 H(+). The catalysed reaction is octanoyl-CoA + H2O = S-octanoyl-4'-phosphopantetheine + adenosine 3',5'-bisphosphate + 2 H(+). The enzyme catalyses butanoyl-CoA + H2O = S-butanoyl-4'-phosphopantetheine + adenosine 3',5'-bisphosphate + 2 H(+). It carries out the reaction propanoyl-CoA + H2O = propanoyl-4'-phosphopantetheine + adenosine 3',5'-bisphosphate + 2 H(+). It catalyses the reaction malonyl-CoA + H2O = malonyl-4'-phosphopantetheine + adenosine 3',5'-bisphosphate + 2 H(+). The catalysed reaction is succinyl-CoA + H2O = succinyl-4'-phosphopantetheine + adenosine 3',5'-bisphosphate + 2 H(+). The enzyme catalyses choloyl-CoA + H2O = S-choloyl-4'-phosphopantetheine + adenosine 3',5'-bisphosphate + 2 H(+). It carries out the reaction 4,8-dimethylnonanoyl-CoA + H2O = S-(4,8-dimethylnonanoyl)-4'-phosphopantetheine + adenosine 3',5'-bisphosphate + 2 H(+). It catalyses the reaction (9Z,12Z,15Z)-octadecatrienoyl-CoA + H2O = S-(9Z,12Z,15Z-octadecatrienoyl)-4'-phosphopantetheine + adenosine 3',5'-bisphosphate + 2 H(+). The catalysed reaction is (9Z,12Z)-octadecadienoyl-CoA + H2O = S-(9Z,12Z-octadecadienoyl)-4'-phosphopantetheine + adenosine 3',5'-bisphosphate + 2 H(+). The enzyme catalyses (9Z)-hexadecenoyl-CoA + H2O = S-(9Z-hexadecenoyl)-4'-phosphopantetheine + adenosine 3',5'-bisphosphate + 2 H(+). It carries out the reaction (9Z)-tetradecenoyl-CoA + H2O = S-(9Z-tetradecenoyl)-4'-phosphopantetheine + adenosine 3',5'-bisphosphate + 2 H(+). It catalyses the reaction (6Z)-octenoyl-CoA + H2O = S-(6Z-octenoyl)-4'-phosphopantetheine + adenosine 3',5'-bisphosphate + 2 H(+). The catalysed reaction is hexadecanoyl-CoA + H2O = S-hexadecanoyl-4'-phosphopantetheine + adenosine 3',5'-bisphosphate + 2 H(+). The enzyme catalyses tetradecanoyl-CoA + H2O = tetradecanoyl-4'-phosphopantetheine + adenosine 3',5'-bisphosphate + 2 H(+). It carries out the reaction dodecanoyl-CoA + H2O = S-dodecanoyl-4'-phosphopantetheine + adenosine 3',5'-bisphosphate + 2 H(+). It catalyses the reaction a 5'-end CoA-ribonucleoside in mRNA + H2O = a 5'-end phospho-adenosine-phospho-ribonucleoside in mRNA + (R)-4'-phosphopantetheine + 2 H(+). Fatty acyl-coenzyme A (CoA) diphosphatase that hydrolyzes fatty acyl-CoA to yield acyl-4'-phosphopantetheine and adenosine 3',5'-bisphosphate. Mediates the hydrolysis of a wide range of CoA esters, including choloyl-CoA and branched-chain fatty-acyl-CoA esters and at low substrate concentrations medium and long-chain fatty-acyl-CoA esters are the primary substrates. Highest activity seen with medium-chain acyl-CoA esters and higher rates of activity seen with the unsaturated acyl-CoA esters compared with the saturated esters. Exhibits decapping activity towards dpCoA-capped RNAs in vitro. This Mus caroli (Ryukyu mouse) protein is Acyl-coenzyme A diphosphatase NUDT19 (Nudt19).